Reading from the N-terminus, the 245-residue chain is 8-amino-3,8-dideoxy-manno-octulosonate cytidylyltransferase (245 aa).

Belongs to the KdsB family.

It localises to the cytoplasm. It carries out the reaction 8-amino-3,8-dideoxy-alpha-D-manno-octulosonate + CTP = CMP-8-amino-3,8-dideoxy-alpha-D-manno-oct-2-ulosonate + diphosphate. It participates in bacterial outer membrane biogenesis; lipopolysaccharide biosynthesis. Activates KDO8N (a required 8-carbon sugar) for incorporation into bacterial lipopolysaccharide in the Shewanella genus. The polypeptide is 8-amino-3,8-dideoxy-manno-octulosonate cytidylyltransferase (Shewanella baltica (strain OS223)).